The following is a 322-amino-acid chain: Protein mono-ADP-ribosyltransferase PARP16 (322 aa).

Over 1–287 (MQLSNRAAAR…RASSQLSWLS (287 aa)) the chain is Cytoplasmic. The PARP alpha-helical domain maps to 5–91 (NRAAAREAAS…AWDLVSWILS (87 aa)). The 186-residue stretch at 94–279 (ILTIHSAKKA…VYSQKQPKRA (186 aa)) folds into the PARP catalytic domain. Positions 152, 182, and 254 each coordinate NAD(+). A helical transmembrane segment spans residues 288 to 308 (SHWFVIMMSLYLLLLLIVSVT). At 309–322 (NSSVFHHFWNRVKR) the chain is on the lumenal side.

The protein belongs to the ARTD/PARP family. As to quaternary structure, interacts with KPNB1. In terms of processing, auto-mono-ADP-ribosylated.

The protein localises to the endoplasmic reticulum membrane. It carries out the reaction L-aspartyl-[protein] + NAD(+) = 4-O-(ADP-D-ribosyl)-L-aspartyl-[protein] + nicotinamide. The catalysed reaction is L-lysyl-[protein] + NAD(+) = N(6)-(ADP-D-ribosyl)-L-lysyl-[protein] + nicotinamide + H(+). It catalyses the reaction L-glutamyl-[protein] + NAD(+) = 5-O-(ADP-D-ribosyl)-L-glutamyl-[protein] + nicotinamide. Its activity is regulated as follows. In absence of activation signal, PARP16 is autoinhibited by the PARP alpha-helical domain (also named HD region), which prevents effective NAD(+)-binding. Activity is highly stimulated by signals, which unfold the PARP alpha-helical domain, relieving autoinhibition. Functionally, intracellular mono-ADP-ribosyltransferase that plays a role in different processes, such as protein translation and unfolded protein response (UPR), through the mono-ADP-ribosylation of proteins involved in those processes. Acts as an inhibitor of protein translation by catalyzing mono-ADP-ribosylation of ribosomal subunits, such as RPL14 and RPS6, thereby inhibiting polysome assembly and mRNA loading. Mono-ADP-ribosylation of ribosomal subunits is promoted by NMNAT2. Involved in the unfolded protein response (UPR) by ADP-ribosylating and activating EIF2AK3 and ERN1, two important UPR effectors. May also mediate mono-ADP-ribosylation of karyopherin KPNB1 a nuclear import factor. May not modify proteins on arginine or cysteine residues compared to other mono-ADP-ribosyltransferases. The chain is Protein mono-ADP-ribosyltransferase PARP16 from Mus musculus (Mouse).